A 442-amino-acid polypeptide reads, in one-letter code: Methylenetetrahydrofolate--tRNA-(uracil-5-)-methyltransferase TrmFO 1 (442 aa).

9-14 contributes to the FAD binding site; the sequence is GAGLAG.

The protein belongs to the MnmG family. TrmFO subfamily. The cofactor is FAD.

The protein resides in the cytoplasm. The catalysed reaction is uridine(54) in tRNA + (6R)-5,10-methylene-5,6,7,8-tetrahydrofolate + NADH + H(+) = 5-methyluridine(54) in tRNA + (6S)-5,6,7,8-tetrahydrofolate + NAD(+). It carries out the reaction uridine(54) in tRNA + (6R)-5,10-methylene-5,6,7,8-tetrahydrofolate + NADPH + H(+) = 5-methyluridine(54) in tRNA + (6S)-5,6,7,8-tetrahydrofolate + NADP(+). Its function is as follows. Catalyzes the folate-dependent formation of 5-methyl-uridine at position 54 (M-5-U54) in all tRNAs. The polypeptide is Methylenetetrahydrofolate--tRNA-(uracil-5-)-methyltransferase TrmFO 1 (Mesoplasma florum (strain ATCC 33453 / NBRC 100688 / NCTC 11704 / L1) (Acholeplasma florum)).